The primary structure comprises 130 residues: Phosphoribosyl-AMP cyclohydrolase (130 aa).

D77 lines the Mg(2+) pocket. C78 contacts Zn(2+). D79 and D81 together coordinate Mg(2+). Zn(2+) contacts are provided by C95 and C102.

It belongs to the PRA-CH family. In terms of assembly, homodimer. The cofactor is Mg(2+). Zn(2+) is required as a cofactor.

Its subcellular location is the cytoplasm. It carries out the reaction 1-(5-phospho-beta-D-ribosyl)-5'-AMP + H2O = 1-(5-phospho-beta-D-ribosyl)-5-[(5-phospho-beta-D-ribosylamino)methylideneamino]imidazole-4-carboxamide. The protein operates within amino-acid biosynthesis; L-histidine biosynthesis; L-histidine from 5-phospho-alpha-D-ribose 1-diphosphate: step 3/9. Functionally, catalyzes the hydrolysis of the adenine ring of phosphoribosyl-AMP. This is Phosphoribosyl-AMP cyclohydrolase from Pseudomonas putida (strain GB-1).